The chain runs to 511 residues: MEKFEGYSEKQKSRQQYFVYPLLFQEYIYAFAHDYGLNGSEPVEIVSWNNKKFSSLLVKRLIIRMYQQNFLDNSVNHPNQDRLLDYKNYFYSEFYSQILSEGFAIVVEIPFSLRELSCPKEKEIPKFQNLRSIHSIFPFLEDKFLHLDYLSHIEIPYPIHLEILVQLLQYRIQDVPSLHLLRFFLNYYSNWNSFITSMKSFFFFQKENKRLVKFLYNSYVSEYEFFLLFLRKQSSCLPLAYSGTFLERIHFSRKMEHFGIMYPGFSRKTLWFFMDPLMHYVRYQGKAILASKGSFFLKKKWKCYLINFWQYYFFFWTQPRRIHINQLANSCFDFMGYLSSVPKSPLLVRNQMLENSFLIDTRMKKFDTIVPATLLIGYLSKAQFCTGSGHPISKPIWTDLSDWDILDRFGRICRNLFHYHSGSSKKQTLYRLKYILRLSCARTLARKHKSTVRTFMQRLGSAFLEEFFTEEEQVFSLMFTKTTLFSFSGSHTERIWYLDIIGINDLVNPLN.

It belongs to the intron maturase 2 family. MatK subfamily.

The protein resides in the plastid. It localises to the chloroplast. Its function is as follows. Usually encoded in the trnK tRNA gene intron. Probably assists in splicing its own and other chloroplast group II introns. The chain is Maturase K from Hordeum bulbosum (Bulbous barley).